Reading from the N-terminus, the 76-residue chain is Adropin (76 aa).

The first 33 residues, 1-33, serve as a signal peptide directing secretion; sequence MGAALSQGALIAIICNGLVGFLLLLLWVILCWA. The tract at residues 41–76 is disordered; it reads IDSLSESSPNSSPGPCPEKAPPPQKPSHEGSYLLQP. The span at 52–65 shows a compositional bias: pro residues; it reads SPGPCPEKAPPPQK.

The protein resides in the secreted. In terms of biological role, involved in the regulation of glucose homeostasis and lipid metabolism. This chain is Adropin (ENHO), found in Bos taurus (Bovine).